The following is a 33-amino-acid chain: U23-ctenitoxin-Pn1a (33 aa).

3 disulfide bridges follow: cysteine 3–cysteine 16, cysteine 10–cysteine 21, and cysteine 15–cysteine 30.

As to expression, expressed by the venom gland.

It localises to the secreted. Functionally, non-toxic to mice. The protein is U23-ctenitoxin-Pn1a of Phoneutria nigriventer (Brazilian armed spider).